The sequence spans 360 residues: Nicotinate-nucleotide--dimethylbenzimidazole phosphoribosyltransferase (360 aa).

Glu327 functions as the Proton acceptor in the catalytic mechanism.

This sequence belongs to the CobT family.

The catalysed reaction is 5,6-dimethylbenzimidazole + nicotinate beta-D-ribonucleotide = alpha-ribazole 5'-phosphate + nicotinate + H(+). Its pathway is nucleoside biosynthesis; alpha-ribazole biosynthesis; alpha-ribazole from 5,6-dimethylbenzimidazole: step 1/2. Catalyzes the synthesis of alpha-ribazole-5'-phosphate from nicotinate mononucleotide (NAMN) and 5,6-dimethylbenzimidazole (DMB). The polypeptide is Nicotinate-nucleotide--dimethylbenzimidazole phosphoribosyltransferase (Shewanella baltica (strain OS155 / ATCC BAA-1091)).